Consider the following 66-residue polypeptide: Large ribosomal subunit protein uL29 (66 aa).

The protein belongs to the universal ribosomal protein uL29 family.

The chain is Large ribosomal subunit protein uL29 from Helicobacter pylori (strain HPAG1).